Reading from the N-terminus, the 160-residue chain is Class B acid phosphatase (160 aa).

Residues 1–23 (MRKVTLTLSAIALALSLNGAAMA) form the signal peptide. The Nucleophile role is filled by Asp69. Positions 69 and 71 each coordinate Mg(2+). Asp71 (proton donor) is an active-site residue. Position 137 to 138 (137 to 138 (TG)) interacts with substrate.

This sequence belongs to the class B bacterial acid phosphatase family. As to quaternary structure, homotetramer. The cofactor is Mg(2+).

The protein localises to the periplasm. It carries out the reaction a phosphate monoester + H2O = an alcohol + phosphate. Its function is as follows. Dephosphorylates several organic phosphate monoesters. Also has a phosphotransferase activity catalyzing the transfer of low-energy phosphate groups from organic phosphate monoesters to free hydroxyl groups of various organic compounds. The protein is Class B acid phosphatase (aphA) of Proteus mirabilis.